We begin with the raw amino-acid sequence, 348 residues long: 3-isopropylmalate dehydrogenase (348 aa).

Position 76–87 (76–87 (GPKWTDPNNRPE)) interacts with NAD(+). The substrate site is built by Arg-94, Arg-104, Arg-132, and Asp-217. Positions 217, 241, and 245 each coordinate Mg(2+). NAD(+) is bound at residue 275–287 (GSAPDIAGKNVAN).

This sequence belongs to the isocitrate and isopropylmalate dehydrogenases family. LeuB type 1 subfamily. In terms of assembly, homodimer. It depends on Mg(2+) as a cofactor. Mn(2+) is required as a cofactor.

It is found in the cytoplasm. It catalyses the reaction (2R,3S)-3-isopropylmalate + NAD(+) = 4-methyl-2-oxopentanoate + CO2 + NADH. Its pathway is amino-acid biosynthesis; L-leucine biosynthesis; L-leucine from 3-methyl-2-oxobutanoate: step 3/4. Functionally, catalyzes the oxidation of 3-carboxy-2-hydroxy-4-methylpentanoate (3-isopropylmalate) to 3-carboxy-4-methyl-2-oxopentanoate. The product decarboxylates to 4-methyl-2 oxopentanoate. The sequence is that of 3-isopropylmalate dehydrogenase from Staphylococcus aureus (strain MW2).